The primary structure comprises 331 residues: Cathepsin 7 (331 aa).

Residues 1–17 (MTPTVFLSILCLGVALA) form the signal peptide. Residues 18–111 (APAPDYNLDA…GKHIQKRNPK (94 aa)) constitute a propeptide, activation peptide. The short motif at 33 to 50 (KRSNDRTYSPEEEKQRRA) is the Nuclear localization signal element. N-linked (GlcNAc...) asparagine glycosylation is present at N72. Cystine bridges form between C133/C176, C167/C209, and C267/C320. C136 is a catalytic residue. Active-site residues include H274 and N298.

It belongs to the peptidase C1 family. As to expression, expressed in placenta. Expressed in parietal and spiral artery-associated trophoblast giant cells, most abundantly during the phase of trophoblast invasion. From 14.5 dpc onwards, expressed at lower levels in labyrinth trophoblast cells. Expressed in trophoblast stem cells. Expressed in heart, liver and testis.

It localises to the endosome. The protein resides in the lysosome. Its subcellular location is the cytoplasm. The protein localises to the perinuclear region. It is found in the golgi apparatus. It localises to the nucleus. The protein resides in the secreted. Its subcellular location is the extracellular space. Its function is as follows. Involved in trophoblast cell proliferation and differentiation probably by affecting mitotic cell cycle progression. Proteolytic activity and nuclear localization are essential for its role in cell cycle progression. The sequence is that of Cathepsin 7 from Mus musculus (Mouse).